The sequence spans 1067 residues: Probable isoleucine--tRNA ligase, cytoplasmic (1067 aa).

Residues 47 to 57 (PFATGLPHYGH) carry the 'HIGH' region motif. The short motif at 604 to 608 (KMSKR) is the 'KMSKS' region element. Lys607 contributes to the ATP binding site.

This sequence belongs to the class-I aminoacyl-tRNA synthetase family.

It localises to the cytoplasm. The catalysed reaction is tRNA(Ile) + L-isoleucine + ATP = L-isoleucyl-tRNA(Ile) + AMP + diphosphate. The sequence is that of Probable isoleucine--tRNA ligase, cytoplasmic (ileS) from Dictyostelium discoideum (Social amoeba).